The sequence spans 479 residues: Putative F-box/LRR-repeat protein At1g56400 (479 aa).

One can recognise an F-box domain in the interval 12 to 60 (QDRLSNLPDVLLIMIISCLSFKECIRTSVLAKRWRYLCRETRNISFKET). LRR repeat units lie at residues 99 to 129 (YFSI…VLDF), 139 to 167 (CASR…KIYS), 186 to 211 (IGWI…SINY), 228 to 254 (VFES…KYSG), 287 to 312 (RTKL…SVCP), 342 to 367 (LHVM…TFDI), and 419 to 446 (LKFL…ELYM).

This chain is Putative F-box/LRR-repeat protein At1g56400, found in Arabidopsis thaliana (Mouse-ear cress).